Reading from the N-terminus, the 190-residue chain is MNTIPYVIEKTAAGERSYDIFSRLLKDRIIMIGSEFNDDLANRVTAQLLFLSAEDNEKDISIYINSPGGSTSAGYAILDTMDYVKPDVRTICVGMAASMGAILLAGGAKGKRYALKNSEIMIHQPLGGVKGQATDMEISAKRIIKLREKIERFFHERTGQPIEKLKADMERDYFMDADEAKAYGVIDAVL.

Ser-98 functions as the Nucleophile in the catalytic mechanism. The active site involves His-123.

This sequence belongs to the peptidase S14 family. As to quaternary structure, fourteen ClpP subunits assemble into 2 heptameric rings which stack back to back to give a disk-like structure with a central cavity, resembling the structure of eukaryotic proteasomes.

Its subcellular location is the cytoplasm. The enzyme catalyses Hydrolysis of proteins to small peptides in the presence of ATP and magnesium. alpha-casein is the usual test substrate. In the absence of ATP, only oligopeptides shorter than five residues are hydrolyzed (such as succinyl-Leu-Tyr-|-NHMec, and Leu-Tyr-Leu-|-Tyr-Trp, in which cleavage of the -Tyr-|-Leu- and -Tyr-|-Trp bonds also occurs).. In terms of biological role, cleaves peptides in various proteins in a process that requires ATP hydrolysis. Has a chymotrypsin-like activity. Plays a major role in the degradation of misfolded proteins. The protein is ATP-dependent Clp protease proteolytic subunit 2 of Bacillus licheniformis (strain ATCC 14580 / DSM 13 / JCM 2505 / CCUG 7422 / NBRC 12200 / NCIMB 9375 / NCTC 10341 / NRRL NRS-1264 / Gibson 46).